A 158-amino-acid polypeptide reads, in one-letter code: 6,7-dimethyl-8-ribityllumazine synthase (158 aa).

5-amino-6-(D-ribitylamino)uracil-binding positions include F22, 57–59, and 84–86; these read AYE and TVI. 89 to 90 is a (2S)-2-hydroxy-3-oxobutyl phosphate binding site; it reads GT. The active-site Proton donor is the H92. F117 provides a ligand contact to 5-amino-6-(D-ribitylamino)uracil. R131 lines the (2S)-2-hydroxy-3-oxobutyl phosphate pocket.

This sequence belongs to the DMRL synthase family. Forms an icosahedral capsid composed of 60 subunits, arranged as a dodecamer of pentamers.

It catalyses the reaction (2S)-2-hydroxy-3-oxobutyl phosphate + 5-amino-6-(D-ribitylamino)uracil = 6,7-dimethyl-8-(1-D-ribityl)lumazine + phosphate + 2 H2O + H(+). It functions in the pathway cofactor biosynthesis; riboflavin biosynthesis; riboflavin from 2-hydroxy-3-oxobutyl phosphate and 5-amino-6-(D-ribitylamino)uracil: step 1/2. Catalyzes the formation of 6,7-dimethyl-8-ribityllumazine by condensation of 5-amino-6-(D-ribitylamino)uracil with 3,4-dihydroxy-2-butanone 4-phosphate. This is the penultimate step in the biosynthesis of riboflavin. This is 6,7-dimethyl-8-ribityllumazine synthase from Pectobacterium atrosepticum (strain SCRI 1043 / ATCC BAA-672) (Erwinia carotovora subsp. atroseptica).